The sequence spans 555 residues: Glutamine--tRNA ligase (555 aa).

Positions 35-45 (PEPNGYLHIGH) match the 'HIGH' region motif. ATP-binding positions include 36–38 (EPN) and 42–48 (HIGHAKS). L-glutamine is bound by residues aspartate 68 and tyrosine 213. ATP-binding positions include threonine 232 and 262–263 (RL). Positions 269–273 (ITSKR) match the 'KMSKS' region motif.

It belongs to the class-I aminoacyl-tRNA synthetase family. Monomer.

The protein resides in the cytoplasm. The enzyme catalyses tRNA(Gln) + L-glutamine + ATP = L-glutaminyl-tRNA(Gln) + AMP + diphosphate. The protein is Glutamine--tRNA ligase of Ectopseudomonas mendocina (strain ymp) (Pseudomonas mendocina).